Reading from the N-terminus, the 267-residue chain is Large ribosomal subunit protein uL4 (267 aa).

The protein belongs to the universal ribosomal protein uL4 family. As to quaternary structure, part of the 50S ribosomal subunit.

In terms of biological role, one of the primary rRNA binding proteins, this protein initially binds near the 5'-end of the 23S rRNA. It is important during the early stages of 50S assembly. It makes multiple contacts with different domains of the 23S rRNA in the assembled 50S subunit and ribosome. Its function is as follows. Forms part of the polypeptide exit tunnel. This Saccharolobus islandicus (strain Y.N.15.51 / Yellowstone #2) (Sulfolobus islandicus) protein is Large ribosomal subunit protein uL4.